The following is a 460-amino-acid chain: Bifunctional protein GlmU (460 aa).

Residues Met-1–Arg-232 are pyrophosphorylase. UDP-N-acetyl-alpha-D-glucosamine is bound by residues Leu-8–Gly-11, Lys-22, Gln-73, Gly-78–Thr-79, Tyr-100–Asp-102, Gly-137, Glu-157, Asn-172, and Asn-230. Position 102 (Asp-102) interacts with Mg(2+). Mg(2+) is bound at residue Asn-230. Positions Val-233–Ala-253 are linker. The segment at Gly-254–Lys-460 is N-acetyltransferase. UDP-N-acetyl-alpha-D-glucosamine is bound by residues Arg-336 and Lys-354. Residue His-366 is the Proton acceptor of the active site. 2 residues coordinate UDP-N-acetyl-alpha-D-glucosamine: Tyr-369 and Asn-380. Acetyl-CoA contacts are provided by residues Ala-383, Asn-389–Tyr-390, Ser-408, Ala-426, and Arg-443.

In the N-terminal section; belongs to the N-acetylglucosamine-1-phosphate uridyltransferase family. It in the C-terminal section; belongs to the transferase hexapeptide repeat family. As to quaternary structure, homotrimer. Requires Mg(2+) as cofactor.

The protein localises to the cytoplasm. It carries out the reaction alpha-D-glucosamine 1-phosphate + acetyl-CoA = N-acetyl-alpha-D-glucosamine 1-phosphate + CoA + H(+). It catalyses the reaction N-acetyl-alpha-D-glucosamine 1-phosphate + UTP + H(+) = UDP-N-acetyl-alpha-D-glucosamine + diphosphate. Its pathway is nucleotide-sugar biosynthesis; UDP-N-acetyl-alpha-D-glucosamine biosynthesis; N-acetyl-alpha-D-glucosamine 1-phosphate from alpha-D-glucosamine 6-phosphate (route II): step 2/2. It participates in nucleotide-sugar biosynthesis; UDP-N-acetyl-alpha-D-glucosamine biosynthesis; UDP-N-acetyl-alpha-D-glucosamine from N-acetyl-alpha-D-glucosamine 1-phosphate: step 1/1. The protein operates within bacterial outer membrane biogenesis; LPS lipid A biosynthesis. Catalyzes the last two sequential reactions in the de novo biosynthetic pathway for UDP-N-acetylglucosamine (UDP-GlcNAc). The C-terminal domain catalyzes the transfer of acetyl group from acetyl coenzyme A to glucosamine-1-phosphate (GlcN-1-P) to produce N-acetylglucosamine-1-phosphate (GlcNAc-1-P), which is converted into UDP-GlcNAc by the transfer of uridine 5-monophosphate (from uridine 5-triphosphate), a reaction catalyzed by the N-terminal domain. The chain is Bifunctional protein GlmU from Shewanella baltica (strain OS195).